Here is a 593-residue protein sequence, read N- to C-terminus: Capsid protein 1 (593 aa).

Belongs to the NCLDV major capsid protein family.

Its subcellular location is the virion. The chain is Capsid protein 1 from Acanthamoeba polyphaga mimivirus (APMV).